Reading from the N-terminus, the 524-residue chain is GMP synthase [glutamine-hydrolyzing] (524 aa).

Residues 5 to 195 (KVIVIDFGGQ…VRGVCGCAGT (191 aa)) form the Glutamine amidotransferase type-1 domain. The Nucleophile role is filled by C82. Active-site residues include H169 and E171. Positions 196-389 (WKMDSFVKNT…LGLPDYLVFR (194 aa)) constitute a GMPS ATP-PPase domain. 223–229 (SGGVDSS) contacts ATP.

As to quaternary structure, homodimer.

The enzyme catalyses XMP + L-glutamine + ATP + H2O = GMP + L-glutamate + AMP + diphosphate + 2 H(+). Its pathway is purine metabolism; GMP biosynthesis; GMP from XMP (L-Gln route): step 1/1. Catalyzes the synthesis of GMP from XMP. The chain is GMP synthase [glutamine-hydrolyzing] from Agathobacter rectalis (strain ATCC 33656 / DSM 3377 / JCM 17463 / KCTC 5835 / VPI 0990) (Eubacterium rectale).